Consider the following 151-residue polypeptide: 3-dehydroquinate dehydratase 1 (151 aa).

Tyr24 (proton acceptor) is an active-site residue. Residues Asn75, His81, and Asp88 each contribute to the substrate site. His101 functions as the Proton donor in the catalytic mechanism. Substrate contacts are provided by residues 102–103 (IS) and Arg112.

Belongs to the type-II 3-dehydroquinase family. As to quaternary structure, homododecamer.

The catalysed reaction is 3-dehydroquinate = 3-dehydroshikimate + H2O. Its pathway is metabolic intermediate biosynthesis; chorismate biosynthesis; chorismate from D-erythrose 4-phosphate and phosphoenolpyruvate: step 3/7. Functionally, catalyzes a trans-dehydration via an enolate intermediate. The polypeptide is 3-dehydroquinate dehydratase 1 (aroQ1) (Corynebacterium efficiens (strain DSM 44549 / YS-314 / AJ 12310 / JCM 11189 / NBRC 100395)).